The following is a 266-amino-acid chain: Cell division cycle-associated protein 3 (266 aa).

A disordered region spans residues 1–84; the sequence is MGSTQSVSGT…TPMKISGPDP (84 aa). 2 positions are modified to phosphoserine: S29 and S31. A compositionally biased stretch (polar residues) spans 32–46; sequence AGIQRTPIQVESSPQ. T37 carries the phosphothreonine modification. Residues S44 and S67 each carry the phosphoserine modification. Residue T75 is modified to Phosphothreonine. The segment at 90 to 119 is F-box-like; sequence KELSEVLETEASESISSPELALPRETPLFY. At S93 the chain carries Phosphoserine. 2 disordered regions span residues 120-225 and 242-266; these read DLDL…LSEN and KAGG…LLES. Residues 143–156 show a composition bias toward basic and acidic residues; the sequence is LDPKQVFTKEEAKQ. Over residues 157–168 the composition is skewed to polar residues; the sequence is SAETIAASQNSD. S197 is subject to Phosphoserine. The residue at position 200 (T200) is a Phosphothreonine. The span at 203–213 shows a compositional bias: polar residues; the sequence is QDDNSPGTLTL. S207 bears the Phosphoserine mark. T210 bears the Phosphothreonine mark. A compositionally biased stretch (basic and acidic residues) spans 250-259; sequence PNQDHDKENQ. Residues 256–258 carry the KEN box motif; sequence KEN.

Interacts with SKP1. Part of a SCF (SKP1-cullin-F-box) protein ligase complex. Ubiquitinated and degraded by the APC/C-Cdh1 complex.

Its subcellular location is the cytoplasm. The protein resides in the cytosol. It participates in protein modification; protein ubiquitination. F-box-like protein which is required for entry into mitosis. Acts by participating in E3 ligase complexes that mediate the ubiquitination and degradation of WEE1 kinase at G2/M phase. The polypeptide is Cell division cycle-associated protein 3 (Cdca3) (Mus musculus (Mouse)).